The chain runs to 273 residues: Phosphate import ATP-binding protein PstB (273 aa).

An ABC transporter domain is found at 19 to 258 (ISIQNVTISY…FNETEKIFNS (240 aa)). 51–58 (GPSGCGKS) serves as a coordination point for ATP.

This sequence belongs to the ABC transporter superfamily. Phosphate importer (TC 3.A.1.7) family. As to quaternary structure, the complex is composed of two ATP-binding proteins (PstB), two transmembrane proteins (PstC and PstA) and a solute-binding protein (PstS).

It localises to the cell inner membrane. It catalyses the reaction phosphate(out) + ATP + H2O = ADP + 2 phosphate(in) + H(+). Its function is as follows. Part of the ABC transporter complex PstSACB involved in phosphate import. Responsible for energy coupling to the transport system. In Parasynechococcus marenigrum (strain WH8102), this protein is Phosphate import ATP-binding protein PstB.